Consider the following 111-residue polypeptide: Transcription and mRNA export factor SUS1 (111 aa).

Belongs to the ENY2 family. As to quaternary structure, component of the nuclear pore complex (NPC)-associated TREX-2 complex (transcription and export complex 2), composed of at least SUS1, SAC3, THP1, SEM1, and CDC31. TREX-2 contains 2 SUS1 chains. The TREX-2 complex interacts with the nucleoporin NUP1. Component of the 1.8 MDa SAGA transcription coactivator-HAT complex. SAGA is built of 5 distinct domains with specialized functions. Within the SAGA complex, SUS1, SGF11, SGF73 and UBP8 form an additional subcomplex of SAGA called the DUB module (deubiquitination module). Interacts directly with THP1, SAC3, SGF11, and with the RNA polymerase II.

The protein resides in the nucleus. It is found in the nucleoplasm. It localises to the cytoplasm. Its subcellular location is the P-body. Its function is as follows. Involved in mRNA export coupled transcription activation by association with both the TREX-2 and the SAGA complexes. At the promoters, SAGA is required for recruitment of the basal transcription machinery. It influences RNA polymerase II transcriptional activity through different activities such as TBP interaction and promoter selectivity, interaction with transcription activators, and chromatin modification through histone acetylation and deubiquitination. Within the SAGA complex, participates in a subcomplex required for deubiquitination of H2B and for the maintenance of steady-state H3 methylation levels. The TREX-2 complex functions in docking export-competent ribonucleoprotein particles (mRNPs) to the nuclear entrance of the nuclear pore complex (nuclear basket). TREX-2 participates in mRNA export and accurate chromatin positioning in the nucleus by tethering genes to the nuclear periphery. May also be involved in cytoplasmic mRNA decay by interaction with components of P-bodies. The protein is Transcription and mRNA export factor SUS1 of Lodderomyces elongisporus (strain ATCC 11503 / CBS 2605 / JCM 1781 / NBRC 1676 / NRRL YB-4239) (Yeast).